The primary structure comprises 365 residues: Aminomethyltransferase (365 aa).

This sequence belongs to the GcvT family. As to quaternary structure, the glycine cleavage system is composed of four proteins: P, T, L and H.

It carries out the reaction N(6)-[(R)-S(8)-aminomethyldihydrolipoyl]-L-lysyl-[protein] + (6S)-5,6,7,8-tetrahydrofolate = N(6)-[(R)-dihydrolipoyl]-L-lysyl-[protein] + (6R)-5,10-methylene-5,6,7,8-tetrahydrofolate + NH4(+). In terms of biological role, the glycine cleavage system catalyzes the degradation of glycine. This chain is Aminomethyltransferase, found in Frankia alni (strain DSM 45986 / CECT 9034 / ACN14a).